A 203-amino-acid polypeptide reads, in one-letter code: Glycerol-3-phosphate acyltransferase (203 aa).

A run of 5 helical transmembrane segments spans residues 5–25 (VLGLVLVAAGYLAGSIPFGVV), 55–75 (KLGIAVLLLDAAKAIVPILVA), 88–108 (FTVLVALAAFVGHLYPVWLGF), 114–134 (VATGLGIFLVLSPWAALAGAV), and 162–182 (FVAHGWTSPVSWAGLALAALI).

Belongs to the PlsY family. Probably interacts with PlsX.

It localises to the cell inner membrane. The enzyme catalyses an acyl phosphate + sn-glycerol 3-phosphate = a 1-acyl-sn-glycero-3-phosphate + phosphate. It functions in the pathway lipid metabolism; phospholipid metabolism. Functionally, catalyzes the transfer of an acyl group from acyl-phosphate (acyl-PO(4)) to glycerol-3-phosphate (G3P) to form lysophosphatidic acid (LPA). This enzyme utilizes acyl-phosphate as fatty acyl donor, but not acyl-CoA or acyl-ACP. The polypeptide is Glycerol-3-phosphate acyltransferase (Anaeromyxobacter sp. (strain Fw109-5)).